The primary structure comprises 352 residues: Nicotinate-nucleotide--dimethylbenzimidazole phosphoribosyltransferase (352 aa).

The active-site Proton acceptor is the Glu-316.

The protein belongs to the CobT family.

The enzyme catalyses 5,6-dimethylbenzimidazole + nicotinate beta-D-ribonucleotide = alpha-ribazole 5'-phosphate + nicotinate + H(+). It functions in the pathway nucleoside biosynthesis; alpha-ribazole biosynthesis; alpha-ribazole from 5,6-dimethylbenzimidazole: step 1/2. Its function is as follows. Catalyzes the synthesis of alpha-ribazole-5'-phosphate from nicotinate mononucleotide (NAMN) and 5,6-dimethylbenzimidazole (DMB). In Ruminiclostridium cellulolyticum (strain ATCC 35319 / DSM 5812 / JCM 6584 / H10) (Clostridium cellulolyticum), this protein is Nicotinate-nucleotide--dimethylbenzimidazole phosphoribosyltransferase.